The chain runs to 567 residues: Proline--tRNA ligase (567 aa).

It belongs to the class-II aminoacyl-tRNA synthetase family. ProS type 1 subfamily. In terms of assembly, homodimer.

It is found in the cytoplasm. The catalysed reaction is tRNA(Pro) + L-proline + ATP = L-prolyl-tRNA(Pro) + AMP + diphosphate. Its function is as follows. Catalyzes the attachment of proline to tRNA(Pro) in a two-step reaction: proline is first activated by ATP to form Pro-AMP and then transferred to the acceptor end of tRNA(Pro). As ProRS can inadvertently accommodate and process non-cognate amino acids such as alanine and cysteine, to avoid such errors it has two additional distinct editing activities against alanine. One activity is designated as 'pretransfer' editing and involves the tRNA(Pro)-independent hydrolysis of activated Ala-AMP. The other activity is designated 'posttransfer' editing and involves deacylation of mischarged Ala-tRNA(Pro). The misacylated Cys-tRNA(Pro) is not edited by ProRS. This Staphylococcus aureus (strain MRSA252) protein is Proline--tRNA ligase.